A 488-amino-acid polypeptide reads, in one-letter code: Glutamyl-tRNA(Gln) amidotransferase subunit A (488 aa).

Active-site charge relay system residues include lysine 77 and serine 152. Catalysis depends on serine 176, which acts as the Acyl-ester intermediate.

This sequence belongs to the amidase family. GatA subfamily. Heterotrimer of A, B and C subunits.

It catalyses the reaction L-glutamyl-tRNA(Gln) + L-glutamine + ATP + H2O = L-glutaminyl-tRNA(Gln) + L-glutamate + ADP + phosphate + H(+). In terms of biological role, allows the formation of correctly charged Gln-tRNA(Gln) through the transamidation of misacylated Glu-tRNA(Gln) in organisms which lack glutaminyl-tRNA synthetase. The reaction takes place in the presence of glutamine and ATP through an activated gamma-phospho-Glu-tRNA(Gln). This Streptococcus pneumoniae (strain ATCC 700669 / Spain 23F-1) protein is Glutamyl-tRNA(Gln) amidotransferase subunit A.